Consider the following 219-residue polypeptide: Translation initiation factor IF-3 (219 aa).

The protein belongs to the IF-3 family. In terms of assembly, monomer.

It is found in the cytoplasm. In terms of biological role, IF-3 binds to the 30S ribosomal subunit and shifts the equilibrium between 70S ribosomes and their 50S and 30S subunits in favor of the free subunits, thus enhancing the availability of 30S subunits on which protein synthesis initiation begins. This Prochlorococcus marinus (strain MIT 9313) protein is Translation initiation factor IF-3.